Here is a 310-residue protein sequence, read N- to C-terminus: ADP-L-glycero-D-manno-heptose-6-epimerase (310 aa).

Residues 10 to 11 (FI), 31 to 32 (DN), lysine 38, lysine 53, 75 to 79 (EGACS), and asparagine 92 each bind NADP(+). The Proton acceptor role is filled by tyrosine 140. Lysine 144 contributes to the NADP(+) binding site. Asparagine 169 is a binding site for substrate. NADP(+)-binding residues include valine 170 and lysine 178. Lysine 178 (proton acceptor) is an active-site residue. Residues serine 180, histidine 187, 201–204 (FEGS), and arginine 209 each bind substrate. Lysine 267 is modified (N6-acetyllysine). Tyrosine 272 contacts substrate.

The protein belongs to the NAD(P)-dependent epimerase/dehydratase family. HldD subfamily. As to quaternary structure, homopentamer. NADP(+) serves as cofactor.

The catalysed reaction is ADP-D-glycero-beta-D-manno-heptose = ADP-L-glycero-beta-D-manno-heptose. It participates in nucleotide-sugar biosynthesis; ADP-L-glycero-beta-D-manno-heptose biosynthesis; ADP-L-glycero-beta-D-manno-heptose from D-glycero-beta-D-manno-heptose 7-phosphate: step 4/4. Its function is as follows. Catalyzes the interconversion between ADP-D-glycero-beta-D-manno-heptose and ADP-L-glycero-beta-D-manno-heptose via an epimerization at carbon 6 of the heptose. The sequence is that of ADP-L-glycero-D-manno-heptose-6-epimerase from Escherichia coli (strain SMS-3-5 / SECEC).